The following is a 264-amino-acid chain: uncharacterized protein (264 aa).

ATP is bound at residue 8 to 15 (IQGGTGKT).

This is an uncharacterized protein from Methanocaldococcus jannaschii (strain ATCC 43067 / DSM 2661 / JAL-1 / JCM 10045 / NBRC 100440) (Methanococcus jannaschii).